Here is a 460-residue protein sequence, read N- to C-terminus: Argininosuccinate lyase (460 aa).

This sequence belongs to the lyase 1 family. Argininosuccinate lyase subfamily.

Its subcellular location is the cytoplasm. The enzyme catalyses 2-(N(omega)-L-arginino)succinate = fumarate + L-arginine. It participates in amino-acid biosynthesis; L-arginine biosynthesis; L-arginine from L-ornithine and carbamoyl phosphate: step 3/3. This Parvibaculum lavamentivorans (strain DS-1 / DSM 13023 / NCIMB 13966) protein is Argininosuccinate lyase.